The sequence spans 423 residues: Gamma-glutamyl phosphate reductase (423 aa).

It belongs to the gamma-glutamyl phosphate reductase family.

It is found in the cytoplasm. It catalyses the reaction L-glutamate 5-semialdehyde + phosphate + NADP(+) = L-glutamyl 5-phosphate + NADPH + H(+). It functions in the pathway amino-acid biosynthesis; L-proline biosynthesis; L-glutamate 5-semialdehyde from L-glutamate: step 2/2. Its function is as follows. Catalyzes the NADPH-dependent reduction of L-glutamate 5-phosphate into L-glutamate 5-semialdehyde and phosphate. The product spontaneously undergoes cyclization to form 1-pyrroline-5-carboxylate. This chain is Gamma-glutamyl phosphate reductase, found in Paraburkholderia phytofirmans (strain DSM 17436 / LMG 22146 / PsJN) (Burkholderia phytofirmans).